Here is a 215-residue protein sequence, read N- to C-terminus: Dual specificity phosphatase 29 (215 aa).

In terms of domain architecture, Tyrosine-protein phosphatase spans His53–Lys201. His145–Arg152 contacts substrate. Residue Cys146 is the Phosphocysteine intermediate of the active site.

It belongs to the protein-tyrosine phosphatase family. Non-receptor class dual specificity subfamily. Homodimer. Interacts with PRKAA2. In terms of tissue distribution, skeletal muscle, liver and adipose tissue.

The protein resides in the cytoplasm. It localises to the nucleus. It catalyses the reaction O-phospho-L-tyrosyl-[protein] + H2O = L-tyrosyl-[protein] + phosphate. The catalysed reaction is O-phospho-L-seryl-[protein] + H2O = L-seryl-[protein] + phosphate. The enzyme catalyses O-phospho-L-threonyl-[protein] + H2O = L-threonyl-[protein] + phosphate. Its function is as follows. Dual specificity phosphatase able to dephosphorylate phosphotyrosine, phosphoserine and phosphothreonine residues within the same substrate, with a preference for phosphotyrosine as a substrate. Involved in the modulation of intracellular signaling cascades. In skeletal muscle regulates systemic glucose homeostasis by activating, AMPK, an energy sensor protein kinase. Affects MAP kinase signaling though modulation of the MAPK1/2 cascade in skeletal muscle promoting muscle cell differentiation, development and atrophy. The sequence is that of Dual specificity phosphatase 29 from Mus musculus (Mouse).